The primary structure comprises 138 residues: Protein FAM136A (138 aa).

An N-acetylalanine modification is found at alanine 2. A phosphothreonine mark is found at threonine 124 and threonine 126.

Belongs to the FAM136 family.

This is Protein FAM136A (Fam136a) from Rattus norvegicus (Rat).